Reading from the N-terminus, the 165-residue chain is NADPH-dependent 7-cyano-7-deazaguanine reductase (165 aa).

The active-site Thioimide intermediate is the Cys-56. Residue Asp-63 is the Proton donor of the active site. Substrate is bound by residues 78 to 80 (VES) and 97 to 98 (HE).

This sequence belongs to the GTP cyclohydrolase I family. QueF type 1 subfamily.

The protein localises to the cytoplasm. The enzyme catalyses 7-aminomethyl-7-carbaguanine + 2 NADP(+) = 7-cyano-7-deazaguanine + 2 NADPH + 3 H(+). Its pathway is tRNA modification; tRNA-queuosine biosynthesis. Its function is as follows. Catalyzes the NADPH-dependent reduction of 7-cyano-7-deazaguanine (preQ0) to 7-aminomethyl-7-deazaguanine (preQ1). The chain is NADPH-dependent 7-cyano-7-deazaguanine reductase from Bacillus mycoides (strain KBAB4) (Bacillus weihenstephanensis).